Here is a 201-residue protein sequence, read N- to C-terminus: MQTSPLLESLMEALRCLPGVGPKSAQRMAFHLLQRNRSGGMRLAQALTRAMSEIGHCKYCRTFTEQEQCTICANPRRQQNGQICVVESPADIHAIEQTGQFAGRYFVLMGHLSPLDGIGPMDIGLDRLEDRLATEEISEVILATNPTVEGEATANYIAEICVQYGVTASRIAHGVPVGGELEMVDGTTLSHSLAGRQKITY.

The segment at 57 to 72 (CKYCRTFTEQEQCTIC) adopts a C4-type zinc-finger fold. One can recognise a Toprim domain in the interval 81 to 176 (GQICVVESPA…TASRIAHGVP (96 aa)).

The protein belongs to the RecR family.

May play a role in DNA repair. It seems to be involved in an RecBC-independent recombinational process of DNA repair. It may act with RecF and RecO. The polypeptide is Recombination protein RecR (Photorhabdus laumondii subsp. laumondii (strain DSM 15139 / CIP 105565 / TT01) (Photorhabdus luminescens subsp. laumondii)).